Here is a 283-residue protein sequence, read N- to C-terminus: ATP synthase gamma chain (283 aa).

The protein belongs to the ATPase gamma chain family. As to quaternary structure, F-type ATPases have 2 components, CF(1) - the catalytic core - and CF(0) - the membrane proton channel. CF(1) has five subunits: alpha(3), beta(3), gamma(1), delta(1), epsilon(1). CF(0) has three main subunits: a, b and c.

It localises to the cell membrane. Its function is as follows. Produces ATP from ADP in the presence of a proton gradient across the membrane. The gamma chain is believed to be important in regulating ATPase activity and the flow of protons through the CF(0) complex. The chain is ATP synthase gamma chain from Clostridium perfringens (strain ATCC 13124 / DSM 756 / JCM 1290 / NCIMB 6125 / NCTC 8237 / Type A).